The sequence spans 359 residues: N-acetylhexosamine 1-kinase (359 aa).

Positions 21-359 (VTGIEPYGDG…IVADIMEAAR (339 aa)) constitute a Protein kinase domain.

This sequence belongs to the protein kinase superfamily. The cofactor is Mg(2+).

It carries out the reaction N-acetyl-D-hexosamine + ATP = N-acetyl-alpha-D-hexosamine 1-phosphate + ADP + H(+). Its function is as follows. Phosphorylates both N-acetylglucosamine (GlcNAc) and N-acetylgalactosamine (GalNAc) at similar rates. Involved in the lacto-N-biose I/galacto-N-biose (LNB/GNB) degradation pathway, which is important for host intestinal colonization by bifidobacteria. Also accepts GTP and ITP as phosphate donors. In vitro, can phosphorylate several GlcNAc and GalNAc derivatives. This Bifidobacterium longum subsp. longum (strain ATCC 15707 / DSM 20219 / JCM 1217 / NCTC 11818 / E194b) protein is N-acetylhexosamine 1-kinase (nahK).